A 552-amino-acid chain; its full sequence is Putative transport protein ECA4401 (552 aa).

5 helical membrane-spanning segments follow: residues 4–24, 26–46, 65–85, 90–112, and 158–178; these read IALT…IGNW, IYGV…VGHV, FGLI…FFSS, GLRL…VMLH, and TGYA…MWLM. RCK C-terminal domains follow at residues 191–276 and 279–361; these read KQFE…VIGN and ETSL…IVGN. Helical transmembrane passes span 371–391, 393–413, 439–459, 464–484, 493–513, and 530–550; these read MLPV…PLMV, GFPV…ALVL, IVLF…DTLL, VWWI…VGIL, YLTL…LAFA, and VYPL…VLFL.

It belongs to the AAE transporter (TC 2.A.81) family. YidE subfamily.

It is found in the cell membrane. The chain is Putative transport protein ECA4401 from Pectobacterium atrosepticum (strain SCRI 1043 / ATCC BAA-672) (Erwinia carotovora subsp. atroseptica).